A 150-amino-acid chain; its full sequence is Large ribosomal subunit protein bL9 (150 aa).

The protein belongs to the bacterial ribosomal protein bL9 family.

In terms of biological role, binds to the 23S rRNA. The chain is Large ribosomal subunit protein bL9 from Streptococcus pyogenes serotype M18 (strain MGAS8232).